Consider the following 389-residue polypeptide: Large ribosomal subunit protein uL3 (389 aa).

It belongs to the universal ribosomal protein uL3 family.

It localises to the cytoplasm. In Debaryomyces hansenii (strain ATCC 36239 / CBS 767 / BCRC 21394 / JCM 1990 / NBRC 0083 / IGC 2968) (Yeast), this protein is Large ribosomal subunit protein uL3 (RPL3).